The primary structure comprises 113 residues: Neocarzinostatin (113 aa).

Disulfide bonds link Cys37–Cys47 and Cys88–Cys93.

It belongs to the neocarzinostatin family.

Functionally, NCS has antibiotic activity (for Gram-positive bacteria) and antitumor activity (for certain mouse tumors). NCS binds non-covalently to a chromophore which is the cytotoxic and mutagenic component of the antibiotic. The chromophore binds to DNA as a weak intercalator and causes single- and double-strand breaks. The polypeptide is Neocarzinostatin (ncsA) (Streptomyces malayensis).